We begin with the raw amino-acid sequence, 118 residues long: NADH-ubiquinone oxidoreductase chain 3 (118 aa).

3 consecutive transmembrane segments (helical) span residues 1–21 (MLFFAVLGLLFFLIFFLVLVF), 59–79 (YTYFILLVFFVVFDLEVSLLL), and 86–106 (VLYKNFFSYLFFLVLLGIGFL).

Belongs to the complex I subunit 3 family.

The protein resides in the mitochondrion membrane. It carries out the reaction a ubiquinone + NADH + 5 H(+)(in) = a ubiquinol + NAD(+) + 4 H(+)(out). Functionally, core subunit of the mitochondrial membrane respiratory chain NADH dehydrogenase (Complex I) that is believed to belong to the minimal assembly required for catalysis. Complex I functions in the transfer of electrons from NADH to the respiratory chain. The immediate electron acceptor for the enzyme is believed to be ubiquinone. In Fasciola hepatica (Liver fluke), this protein is NADH-ubiquinone oxidoreductase chain 3 (ND3).